Here is a 126-residue protein sequence, read N- to C-terminus: Prefoldin subunit beta (126 aa).

Belongs to the prefoldin subunit beta family. In terms of assembly, heterohexamer of two alpha and four beta subunits.

It localises to the cytoplasm. Its function is as follows. Molecular chaperone capable of stabilizing a range of proteins. Seems to fulfill an ATP-independent, HSP70-like function in archaeal de novo protein folding. The sequence is that of Prefoldin subunit beta from Saccharolobus islandicus (strain Y.N.15.51 / Yellowstone #2) (Sulfolobus islandicus).